The sequence spans 113 residues: Sensorin-A (113 aa).

Residues 1-32 (MPSRAATSPLNVQMMVVLCIVCLALQAVAANA) form the signal peptide. The residue at position 54 (Phe-54) is a Phenylalanine amide. The propeptide occupies 58-113 (SSSETYSTNLINLLSRQLVSQEELRAILEKQPILLDEVVKILDRNDDGYITVADLL). In terms of domain architecture, EF-hand spans 87-113 (KQPILLDEVVKILDRNDDGYITVADLL). Asp-100, Asn-102, Asp-104, Tyr-106, and Asp-111 together coordinate Ca(2+).

As to expression, seems to be specific to the mechanosensory neurons of the central nervous system.

The protein localises to the secreted. Functionally, may function as an inhibitory cotransmitter acting in conjunction with the fast excitatory transmitter released by sensory neurons. The peptide selectively inhibits certain postsynaptic cells probably by means of sensorin A release. The polypeptide is Sensorin-A (PSC1) (Aplysia californica (California sea hare)).